The following is a 445-amino-acid chain: Hydroxycinnamoyl-CoA:5-hydroxyanthranilate N-hydroxycinnamoyltransferase HHT4 (445 aa).

It belongs to the plant acyltransferase family.

It carries out the reaction 5-hydroxyanthranilate + (E)-4-coumaroyl-CoA = avenanthramide A + CoA. The catalysed reaction is 5-hydroxyanthranilate + (E)-caffeoyl-CoA = avenanthramide C + CoA. In terms of biological role, involved in the biosynthesis of avenanthramide phytoalexins, which are phenolic alkaloids found mainly in oats. Catalyzes the N-acylation of 5-hydroxyanthranilate with 4-coumaroyl-CoA or caffeoyl-CoA as acyl donors, forming avenanthramide A and avenanthramide C, respectively. Does not accept feruloyl-CoA as a substrate. This is Hydroxycinnamoyl-CoA:5-hydroxyanthranilate N-hydroxycinnamoyltransferase HHT4 from Avena sativa (Oat).